Consider the following 377-residue polypeptide: Membrane protein MLC1 (377 aa).

Residues 1–23 are compositionally biased toward basic and acidic residues; it reads MTQEPFREELAYDRMPTLERGRQ. The interval 1–36 is disordered; the sequence is MTQEPFREELAYDRMPTLERGRQDPASYAPDAKPSD. 4 helical membrane passes run 52 to 72, 82 to 100, 111 to 131, and 144 to 164; these read WVFSVLMGSCLLVTSGFSLYL, YLRCAAGSCIPSAIVSFTV, FQILFVSTFAVTTTCLIWFGC, and FNLILLLLLELLMAATVIIAA. Residues Ser-177 and Ser-179 each carry the phosphoserine modification. 4 consecutive transmembrane segments (helical) span residues 199–219, 230–250, 257–277, and 304–324; these read SVVEVIAGISAVLGGIIALNV, VTFFWILVACFPSAIASHVAA, LVEVLIAISSLTSPLLFTASG, and LLLLLLLVLLLQAGLNTGTAI.

Interacts with ATP1B1. Part of a complex containing ATP1B1, TRPV4, AQP4 and HEPACAM. As to expression, expressed in the brain, with highest levels found in the amygdala, nucleus caudatus, thalamus and hippocampus.

It is found in the membrane. It localises to the cell membrane. The protein resides in the cytoplasm. Its subcellular location is the perinuclear region. The protein localises to the endoplasmic reticulum. In terms of biological role, transmembrane protein mainly expressed in brain astrocytes that may play a role in transport across the blood-brain and brain-cerebrospinal fluid barriers. Regulates the response of astrocytes to hypo-osmosis by promoting calcium influx. May function as regulatory protein of membrane protein complexes such as ion channels. The chain is Membrane protein MLC1 from Homo sapiens (Human).